Consider the following 325-residue polypeptide: Phospho-N-acetylmuramoyl-pentapeptide-transferase (325 aa).

10 helical membrane passes run 9–29 (ALLV…PWLL), 53–73 (TMGG…FQAF), 77–97 (TLLL…DDYL), 112–132 (KLLG…AFLG), 154–174 (LGNV…ANAV), 182–202 (GLCS…SLAL), 204–224 (EKGL…FLVY), 231–251 (VFMG…FAVL), 257–277 (FLLL…IQVI), and 305–325 (KIVL…GYGL).

This sequence belongs to the glycosyltransferase 4 family. MraY subfamily. Mg(2+) is required as a cofactor.

The protein resides in the cell membrane. The enzyme catalyses UDP-N-acetyl-alpha-D-muramoyl-L-alanyl-gamma-D-glutamyl-meso-2,6-diaminopimeloyl-D-alanyl-D-alanine + di-trans,octa-cis-undecaprenyl phosphate = di-trans,octa-cis-undecaprenyl diphospho-N-acetyl-alpha-D-muramoyl-L-alanyl-D-glutamyl-meso-2,6-diaminopimeloyl-D-alanyl-D-alanine + UMP. Its pathway is cell wall biogenesis; peptidoglycan biosynthesis. Functionally, catalyzes the initial step of the lipid cycle reactions in the biosynthesis of the cell wall peptidoglycan: transfers peptidoglycan precursor phospho-MurNAc-pentapeptide from UDP-MurNAc-pentapeptide onto the lipid carrier undecaprenyl phosphate, yielding undecaprenyl-pyrophosphoryl-MurNAc-pentapeptide, known as lipid I. This is Phospho-N-acetylmuramoyl-pentapeptide-transferase from Carboxydothermus hydrogenoformans (strain ATCC BAA-161 / DSM 6008 / Z-2901).